We begin with the raw amino-acid sequence, 945 residues long: Isoleucine--tRNA ligase (945 aa).

The 'HIGH' region motif lies at 66–76; the sequence is PYANGDIHLGH. Residue Glu-581 participates in L-isoleucyl-5'-AMP binding. The 'KMSKS' region motif lies at 622 to 626; the sequence is KMSKS. Lys-625 contacts ATP. Positions 908, 911, 928, and 931 each coordinate Zn(2+).

The protein belongs to the class-I aminoacyl-tRNA synthetase family. IleS type 1 subfamily. As to quaternary structure, monomer. Zn(2+) serves as cofactor.

It localises to the cytoplasm. It carries out the reaction tRNA(Ile) + L-isoleucine + ATP = L-isoleucyl-tRNA(Ile) + AMP + diphosphate. Its function is as follows. Catalyzes the attachment of isoleucine to tRNA(Ile). As IleRS can inadvertently accommodate and process structurally similar amino acids such as valine, to avoid such errors it has two additional distinct tRNA(Ile)-dependent editing activities. One activity is designated as 'pretransfer' editing and involves the hydrolysis of activated Val-AMP. The other activity is designated 'posttransfer' editing and involves deacylation of mischarged Val-tRNA(Ile). This is Isoleucine--tRNA ligase from Burkholderia cenocepacia (strain ATCC BAA-245 / DSM 16553 / LMG 16656 / NCTC 13227 / J2315 / CF5610) (Burkholderia cepacia (strain J2315)).